The sequence spans 134 residues: D-ribose pyranase (134 aa).

Catalysis depends on His20, which acts as the Proton donor. Substrate is bound by residues Asp28, His99, and 123–125 (FSN).

This sequence belongs to the RbsD / FucU family. RbsD subfamily. Homodecamer.

It is found in the cytoplasm. The catalysed reaction is beta-D-ribopyranose = beta-D-ribofuranose. It functions in the pathway carbohydrate metabolism; D-ribose degradation; D-ribose 5-phosphate from beta-D-ribopyranose: step 1/2. Functionally, catalyzes the interconversion of beta-pyran and beta-furan forms of D-ribose. The chain is D-ribose pyranase from Staphylococcus carnosus (strain TM300).